We begin with the raw amino-acid sequence, 158 residues long: Transcription factor BTF3 homolog 4 (158 aa).

Residues 33–98 (TADDKKLQSS…AETKQLTEML (66 aa)) enclose the NAC-A/B domain. A disordered region spans residues 125 to 158 (LDNKAPKAEDIDEEDDDVPDLVENFDEASKNEAN). The segment covering 134 to 150 (DIDEEDDDVPDLVENFD) has biased composition (acidic residues).

The protein belongs to the NAC-beta family.

This Danio rerio (Zebrafish) protein is Transcription factor BTF3 homolog 4 (btf3l4).